The sequence spans 432 residues: Adenylosuccinate synthetase (432 aa).

GTP is bound by residues G12–K18 and G40–T42. Catalysis depends on D13, which acts as the Proton acceptor. D13 and G40 together coordinate Mg(2+). IMP is bound by residues D13–K16, N38–H41, T130, R144, Q225, T240, and R304. The Proton donor role is filled by H41. A300–R306 contacts substrate. GTP-binding positions include R306, K332–D334, and S415–G417.

This sequence belongs to the adenylosuccinate synthetase family. Homodimer. Requires Mg(2+) as cofactor.

The protein localises to the cytoplasm. The catalysed reaction is IMP + L-aspartate + GTP = N(6)-(1,2-dicarboxyethyl)-AMP + GDP + phosphate + 2 H(+). It functions in the pathway purine metabolism; AMP biosynthesis via de novo pathway; AMP from IMP: step 1/2. Functionally, plays an important role in the de novo pathway of purine nucleotide biosynthesis. Catalyzes the first committed step in the biosynthesis of AMP from IMP. This Syntrophus aciditrophicus (strain SB) protein is Adenylosuccinate synthetase.